The primary structure comprises 291 residues: Phosphatidylglycerol--prolipoprotein diacylglyceryl transferase (291 aa).

The next 7 helical transmembrane spans lie at 21 to 41 (VSLHWYGLMYLVGFVFAMWLA), 60 to 80 (LLYAGFLGVFLGGRIGYVLFY), 96 to 116 (WDGGMSFHGGLIGVILVMIIF), 130 to 150 (FIAPLIPFGLGAGRLGNFING), 198 to 218 (SQLYELALEGVVLFLILNLFI), 225 to 245 (GSVSGLFLIGYGLFRIIVEFF), and 260 to 280 (ISMGQILSIPMVLAGIIMMVW). An a 1,2-diacyl-sn-glycero-3-phospho-(1'-sn-glycerol)-binding site is contributed by R143.

The protein belongs to the Lgt family.

The protein resides in the cell inner membrane. The enzyme catalyses L-cysteinyl-[prolipoprotein] + a 1,2-diacyl-sn-glycero-3-phospho-(1'-sn-glycerol) = an S-1,2-diacyl-sn-glyceryl-L-cysteinyl-[prolipoprotein] + sn-glycerol 1-phosphate + H(+). It functions in the pathway protein modification; lipoprotein biosynthesis (diacylglyceryl transfer). Its function is as follows. Catalyzes the transfer of the diacylglyceryl group from phosphatidylglycerol to the sulfhydryl group of the N-terminal cysteine of a prolipoprotein, the first step in the formation of mature lipoproteins. The chain is Phosphatidylglycerol--prolipoprotein diacylglyceryl transferase from Klebsiella pneumoniae (strain 342).